The sequence spans 518 residues: 3-octaprenyl-4-hydroxybenzoate carboxy-lyase (518 aa).

Asparagine 177 lines the Mn(2+) pocket. Residues 180 to 182 (IYR), 194 to 196 (RWL), and 199 to 200 (RG) contribute to the prenylated FMN site. Glutamate 243 lines the Mn(2+) pocket. The active-site Proton donor is aspartate 318.

The protein belongs to the UbiD family. Homohexamer. Prenylated FMN is required as a cofactor. Mn(2+) serves as cofactor.

It localises to the cell membrane. It carries out the reaction a 4-hydroxy-3-(all-trans-polyprenyl)benzoate + H(+) = a 2-(all-trans-polyprenyl)phenol + CO2. The protein operates within cofactor biosynthesis; ubiquinone biosynthesis. Functionally, catalyzes the decarboxylation of 3-octaprenyl-4-hydroxy benzoate to 2-octaprenylphenol, an intermediate step in ubiquinone biosynthesis. This Burkholderia orbicola (strain AU 1054) protein is 3-octaprenyl-4-hydroxybenzoate carboxy-lyase.